The following is a 459-amino-acid chain: tRNA modification GTPase MnmE (459 aa).

Residues arginine 21, glutamate 84, and arginine 123 each coordinate (6S)-5-formyl-5,6,7,8-tetrahydrofolate. A TrmE-type G domain is found at 219–378 (GVTVALAGAV…LLVLLYNFVL (160 aa)). Residues 229-234 (NAGKSS), 248-254 (TEHPGTT), and 273-276 (DTAG) each bind GTP. Mg(2+) is bound by residues serine 233 and threonine 254. Position 459 (lysine 459) interacts with (6S)-5-formyl-5,6,7,8-tetrahydrofolate.

Belongs to the TRAFAC class TrmE-Era-EngA-EngB-Septin-like GTPase superfamily. TrmE GTPase family. As to quaternary structure, homodimer. Heterotetramer of two MnmE and two MnmG subunits. It depends on K(+) as a cofactor.

It localises to the cytoplasm. Its function is as follows. Exhibits a very high intrinsic GTPase hydrolysis rate. Involved in the addition of a carboxymethylaminomethyl (cmnm) group at the wobble position (U34) of certain tRNAs, forming tRNA-cmnm(5)s(2)U34. This chain is tRNA modification GTPase MnmE, found in Lawsonia intracellularis (strain PHE/MN1-00).